A 511-amino-acid polypeptide reads, in one-letter code: Maturase K (511 aa).

It belongs to the intron maturase 2 family. MatK subfamily.

It localises to the plastid. The protein localises to the chloroplast. Functionally, usually encoded in the trnK tRNA gene intron. Probably assists in splicing its own and other chloroplast group II introns. In Phleum pratense (Common timothy), this protein is Maturase K.